The primary structure comprises 338 residues: tRNA N6-adenosine threonylcarbamoyltransferase (338 aa).

2 residues coordinate Fe cation: His109 and His113. Substrate-binding positions include 132–136 (AISGA), Asp165, Gly178, and Asn277. A Fe cation-binding site is contributed by Asp302.

It belongs to the KAE1 / TsaD family. Fe(2+) is required as a cofactor.

It is found in the cytoplasm. It carries out the reaction L-threonylcarbamoyladenylate + adenosine(37) in tRNA = N(6)-L-threonylcarbamoyladenosine(37) in tRNA + AMP + H(+). Functionally, required for the formation of a threonylcarbamoyl group on adenosine at position 37 (t(6)A37) in tRNAs that read codons beginning with adenine. Is involved in the transfer of the threonylcarbamoyl moiety of threonylcarbamoyl-AMP (TC-AMP) to the N6 group of A37, together with TsaE and TsaB. TsaD likely plays a direct catalytic role in this reaction. In Chlamydia trachomatis serovar A (strain ATCC VR-571B / DSM 19440 / HAR-13), this protein is tRNA N6-adenosine threonylcarbamoyltransferase.